A 513-amino-acid polypeptide reads, in one-letter code: Serine/threonine-protein kinase pakH (513 aa).

Positions 42–294 constitute a Protein kinase domain; the sequence is FEIQEKLGEG…PSQLLDHPFI (253 aa). Residues 48–56 and K71 contribute to the ATP site; that span reads LGEGSFGSV. The Proton acceptor role is filled by D163. The disordered stretch occupies residues 313–358; sequence KSKKRKSIGPSVSPKQQPNDNNNNNNNNKPQFLSKLLNNNSNSSND. Low complexity predominate over residues 331 to 357; the sequence is NDNNNNNNNNKPQFLSKLLNNNSNSSN. The chain crosses the membrane as a helical span at residues 493 to 512; that stretch reads IVLYSTLGLILVLSVFFKFF.

Belongs to the protein kinase superfamily. STE Ser/Thr protein kinase family. STE20 subfamily. The cofactor is Mg(2+).

The protein resides in the membrane. It catalyses the reaction L-seryl-[protein] + ATP = O-phospho-L-seryl-[protein] + ADP + H(+). The enzyme catalyses L-threonyl-[protein] + ATP = O-phospho-L-threonyl-[protein] + ADP + H(+). This chain is Serine/threonine-protein kinase pakH (pakH-1), found in Dictyostelium discoideum (Social amoeba).